A 263-amino-acid polypeptide reads, in one-letter code: 4-hydroxy-tetrahydrodipicolinate reductase (263 aa).

Residues 8–13 (GACGKM), Asp34, 97–99 (GTT), and 123–126 (APNF) each bind NAD(+). Catalysis depends on His153, which acts as the Proton donor/acceptor. Residue His154 coordinates (S)-2,3,4,5-tetrahydrodipicolinate. Lys157 functions as the Proton donor in the catalytic mechanism. 163-164 (GT) contacts (S)-2,3,4,5-tetrahydrodipicolinate.

Belongs to the DapB family.

It is found in the cytoplasm. The enzyme catalyses (S)-2,3,4,5-tetrahydrodipicolinate + NAD(+) + H2O = (2S,4S)-4-hydroxy-2,3,4,5-tetrahydrodipicolinate + NADH + H(+). It catalyses the reaction (S)-2,3,4,5-tetrahydrodipicolinate + NADP(+) + H2O = (2S,4S)-4-hydroxy-2,3,4,5-tetrahydrodipicolinate + NADPH + H(+). Its pathway is amino-acid biosynthesis; L-lysine biosynthesis via DAP pathway; (S)-tetrahydrodipicolinate from L-aspartate: step 4/4. Catalyzes the conversion of 4-hydroxy-tetrahydrodipicolinate (HTPA) to tetrahydrodipicolinate. In Carboxydothermus hydrogenoformans (strain ATCC BAA-161 / DSM 6008 / Z-2901), this protein is 4-hydroxy-tetrahydrodipicolinate reductase.